A 122-amino-acid chain; its full sequence is Non-specific lipid-transfer protein (122 aa).

Residues 1–19 (MGVSRACFVVMVVVYMVVA) form the signal peptide. Residues 20–29 (ATPNVKLAEA) constitute a propeptide that is removed on maturation. 4 disulfide bridges follow: cysteine 32–cysteine 81, cysteine 42–cysteine 58, cysteine 59–cysteine 104, and cysteine 79–cysteine 118.

As to quaternary structure, monomer.

In terms of biological role, plant non-specific lipid-transfer proteins transfer phospholipids as well as galactolipids across membranes. May play a role in wax or cutin deposition in the cell walls of expanding epidermal cells and certain secretory tissues. Binds saturated fatty acids, unsaturated fatty acids, lysolipids and, with highest efficiency, jasmonic acid. Has weak antimicrobial activity against fungi. Inhibits spore germination and hyphae elongation in A.niger VKM F-2259 and N.crassa VKM F-184. Has no antibacterial activity against A.tumefaciens A281, C.michiganensis VKM Ac-144 and P.syringae VKM B-1546. The polypeptide is Non-specific lipid-transfer protein (Anethum graveolens (Dill)).